Consider the following 362-residue polypeptide: Peptide chain release factor 1 (362 aa).

Gln-237 is subject to N5-methylglutamine. Residues 285–295 (EEKRHAEEAST) show a composition bias toward basic and acidic residues. The segment at 285–311 (EEKRHAEEASTRRNLLGSGDRSDRIRT) is disordered.

It belongs to the prokaryotic/mitochondrial release factor family. In terms of processing, methylated by PrmC. Methylation increases the termination efficiency of RF1.

It localises to the cytoplasm. Its function is as follows. Peptide chain release factor 1 directs the termination of translation in response to the peptide chain termination codons UAG and UAA. The polypeptide is Peptide chain release factor 1 (Photobacterium profundum (strain SS9)).